Consider the following 151-residue polypeptide: MKIWVDADACPGVIKEILFRVADRAKVEVTLVANHSMRIPPSRYINMVTVPSGFDVADDEIVKRLDAGDLVITADIPLASEVIDKGGVALNPRGELYTEQNIKSILNMRDFMDTMRASGVQTGGPAAIGASEKQAFGNQLDRFVTKHHKPV.

It belongs to the UPF0178 family.

This Shewanella woodyi (strain ATCC 51908 / MS32) protein is UPF0178 protein Swoo_1444.